We begin with the raw amino-acid sequence, 120 residues long: Probable non-functional immunoglobulin kappa variable 2D-24 (120 aa).

The N-terminal stretch at 1–19 (MRLLAQLLGLLMLWVPGSS) is a signal peptide. One can recognise an Ig-like domain in the interval 20-120 (GDIVMTQTPL…YYCTQATQFP (101 aa)). The framework-1 stretch occupies residues 21 to 43 (DIVMTQTPLSSPVTLGQPASISF). Residues 44–59 (RSSQSLVHSDGNTYLS) are complementarity-determining-1. Positions 60-74 (WLQQRPGQPPRLLIY) are framework-2. The tract at residues 75–81 (KVSNRFS) is complementarity-determining-2. The interval 82–113 (GVPDRFSGSGAGTDFTLKISRVEAEDVGVYYC) is framework-3. The segment at 114 to 120 (TQATQFP) is complementarity-determining-3.

As to quaternary structure, most probably, the immunoglobulin is not assembled due to incorrect folding of light chain. Immunoglobulins are composed of two identical heavy chains and two identical light chains; disulfide-linked.

The protein localises to the secreted. The protein resides in the cell membrane. Its function is as follows. Probable non-functional open reading frame (ORF) of V region of the variable domain of immunoglobulin light chains. Non-functional ORF generally cannot participate in the synthesis of a productive immunoglobulin chain due to altered V-(D)-J or switch recombination and/or splicing site (at mRNA level) and/or conserved amino acid change (protein level). Immunoglobulins, also known as antibodies, are membrane-bound or secreted glycoproteins produced by B lymphocytes. In the recognition phase of humoral immunity, the membrane-bound immunoglobulins serve as receptors which, upon binding of a specific antigen, trigger the clonal expansion and differentiation of B lymphocytes into immunoglobulins-secreting plasma cells. Secreted immunoglobulins mediate the effector phase of humoral immunity, which results in the elimination of bound antigens. The antigen binding site is formed by the variable domain of one heavy chain, together with that of its associated light chain. Thus, each immunoglobulin has two antigen binding sites with remarkable affinity for a particular antigen. The variable domains are assembled by a process called V-(D)-J rearrangement and can then be subjected to somatic hypermutations which, after exposure to antigen and selection, allow affinity maturation for a particular antigen. The protein is Probable non-functional immunoglobulin kappa variable 2D-24 of Homo sapiens (Human).